We begin with the raw amino-acid sequence, 256 residues long: Small ribosomal subunit protein uS2 (256 aa).

The protein belongs to the universal ribosomal protein uS2 family.

The protein is Small ribosomal subunit protein uS2 of Streptococcus agalactiae serotype III (strain NEM316).